Consider the following 477-residue polypeptide: Glycogen synthase (477 aa).

Lysine 15 contributes to the ADP-alpha-D-glucose binding site.

It belongs to the glycosyltransferase 1 family. Bacterial/plant glycogen synthase subfamily.

It carries out the reaction [(1-&gt;4)-alpha-D-glucosyl](n) + ADP-alpha-D-glucose = [(1-&gt;4)-alpha-D-glucosyl](n+1) + ADP + H(+). It functions in the pathway glycan biosynthesis; glycogen biosynthesis. Functionally, synthesizes alpha-1,4-glucan chains using ADP-glucose. In Streptococcus pneumoniae (strain JJA), this protein is Glycogen synthase.